A 651-amino-acid chain; its full sequence is Protein numb homolog (651 aa).

Residues 33 to 193 (RTGKCSFPVK…ASRTTFTREG (161 aa)) enclose the PID domain. T102 is modified (phosphothreonine; by AAK1). S194 bears the Phosphoserine mark. The disordered stretch occupies residues 228–255 (SSVAPGNTAPSPSSPTSPTSDATTSLEM). Over residues 235 to 252 (TAPSPSSPTSPTSDATTS) the composition is skewed to low complexity. T243 carries the phosphothreonine modification. S244 is modified (phosphoserine). Phosphoserine; by CaMK1 occurs at positions 276 and 295. 2 disordered regions span residues 419-483 (QSSG…SPFQ) and 623-651 (LENK…EIEL). Position 425 is a phosphoserine (S425). The residue at position 436 (T436) is a Phosphothreonine. A compositionally biased stretch (basic and acidic residues) spans 436-449 (TPSEADRWLEEVSK). S438 is modified (phosphoserine). A compositionally biased stretch (low complexity) spans 453 to 466 (AQQPQASAAPLQPV). The span at 630–644 (RTNPSPTNPFSSDLQ) shows a compositional bias: polar residues. S634 is modified (phosphoserine).

As to quaternary structure, interacts with SIAH1. Interacts with LNX. Interacts with CDH1. Interacts with TFAP2A and TFAP2B. Interacts with RALBP1 in a complex also containing EPN1 and TFAP2A during interphase and mitosis. Interacts with AAK1. May interact with DUOXA1. In terms of processing, phosphorylated on Ser-276 and Ser-295 by CaMK1. Isoform 1 and isoform 2 are ubiquitinated by LNX leading to their subsequent proteasomal degradation. Ubiquitinated; mediated by SIAH1 and leading to its subsequent proteasomal degradation.

It localises to the cell membrane. The protein localises to the endosome membrane. Regulates clathrin-mediated receptor endocytosis. Plays a role in the process of neurogenesis. Required throughout embryonic neurogenesis to maintain neural progenitor cells, also called radial glial cells (RGCs), by allowing their daughter cells to choose progenitor over neuronal cell fate. Not required for the proliferation of neural progenitor cells before the onset of neurogenesis. Also involved postnatally in the subventricular zone (SVZ) neurogenesis by regulating SVZ neuroblasts survival and ependymal wall integrity. May also mediate local repair of brain ventricular wall damage. This chain is Protein numb homolog, found in Homo sapiens (Human).